A 270-amino-acid chain; its full sequence is tRNA pseudouridine synthase A (270 aa).

Aspartate 54 functions as the Nucleophile in the catalytic mechanism. A substrate-binding site is contributed by tyrosine 112.

Belongs to the tRNA pseudouridine synthase TruA family. In terms of assembly, homodimer.

It carries out the reaction uridine(38/39/40) in tRNA = pseudouridine(38/39/40) in tRNA. Its function is as follows. Formation of pseudouridine at positions 38, 39 and 40 in the anticodon stem and loop of transfer RNAs. The protein is tRNA pseudouridine synthase A of Bordetella bronchiseptica (strain ATCC BAA-588 / NCTC 13252 / RB50) (Alcaligenes bronchisepticus).